Consider the following 390-residue polypeptide: MKIAMVTWEYPPRIVGGLAIHCKGLAEGLVRNGHEVDVITVGYDLPEYENINGVNVYRVRPISHPHFLTWAMFMAEEMEKKLGILGVDKYDVIHCHDWMTHFVGANLKHICRMPYVQSIHSTEIGRCGGLYSDDSKAIHAMEYLSTYESCQVITVSKSLKEEVCSIFNTPEDKVKVIYNGINPWEFDINLSWEEKINFRRSIGVQDDEKMILFVGRLTYQKGIEYLIRAMPKILERHNAKLVIAGSGDMRDYLEDLCYQLGVRHKVVFLGFVNGDTLKKLYKSADVVVIPSVYEPFGIVALEAMAAGTPVVVSSVGGLMEIIKHEVNGIWVYPKNPDSIAWGVDRVLSDWGFREYIVNNAKKDVYEKYSWDNIAKETVNVYKIAMEMMGR.

Belongs to the glycosyltransferase group 1 family. Glycosyltransferase 4 subfamily.

This is an uncharacterized protein from Methanocaldococcus jannaschii (strain ATCC 43067 / DSM 2661 / JAL-1 / JCM 10045 / NBRC 100440) (Methanococcus jannaschii).